A 666-amino-acid chain; its full sequence is TATA box-binding protein-associated factor RNA polymerase I subunit B (666 aa).

Residues 1-29 (MICTECENDAFDEEDDGYYYCQRCGVQVE) form an RRN7-type zinc finger. Cys3, Cys6, Cys21, and Cys24 together coordinate Zn(2+). Residues 30-64 (NLIQTGVDDGDLIGEGGGTQGALYNPKHRRTEPQP) are B-reader. Disordered regions lie at residues 45–110 (GGGT…VDKE) and 189–208 (DSEH…LKRH). The segment at 65 to 80 (ITPSQPRFTDDTSRYS) is B-linker. The segment covering 78-89 (RYSQFKSQFESE) has biased composition (polar residues). Residues 81–285 (QFKSQFESEN…REQMGERSAA (205 aa)) are N-terminal cyclin fold. 2 stretches are compositionally biased toward basic and acidic residues: residues 90–110 (NGNK…VDKE) and 189–202 (DSEH…VKDA). The interval 286 to 288 (CPV) is C-terminal cyclin fold. Residues 515–548 (SDGNNPCSSSSRRNESVSIGLDLSSSEHRESSSP) form a disordered region. The segment covering 539 to 548 (SSEHRESSSP) has biased composition (basic and acidic residues).

Belongs to the RRN7/TAF1B family. In terms of assembly, interacts with TFIIF. Interacts with MEE14/CBP1, TBP1 and NRPB1 (via CTD). Expressed at high levels in seedlings, inflorescences and young siliques and at lower levels in roots. Not detected in leaves and stems. Detected in root tips and shoot apical meristems, in anthers, primarily in microspores with weaker expression in mature pollen grains and in the central cell of the mature female gametophyte. Not expressed in synergids, egg cells, antipodal cells, endosperm cells and fertilized egg cells.

Its subcellular location is the nucleus. The protein localises to the nucleolus. In terms of biological role, component of RNA polymerase I core factor complex that acts as a GTF2B/TFIIB-like factor and plays a key role in multiple steps during transcription initiation such as pre-initiation complex (PIC) assembly and postpolymerase recruitment events in polymerase I (Pol I) transcription. Binds rDNA promoters and plays a role in Pol I recruitment. Required for the development of the one-cell zygote and endosperm in embryos. Required for micropylar pollen tube guidance, but has no effect on ovule development and gametophytic cell fate specification. May regulate the transcription of secreted cysteine-rich peptide (CRP) genes in the embryo sac. In Arabidopsis thaliana (Mouse-ear cress), this protein is TATA box-binding protein-associated factor RNA polymerase I subunit B.